The sequence spans 426 residues: Histone-binding protein RBBP7 (426 aa).

WD repeat units follow at residues 47 to 123, 129 to 174, 182 to 218, 229 to 270, 276 to 313, 319 to 370, and 377 to 404; these read QWLP…KINH, RARY…LRLR, GLSW…KIVD, VVED…HSVD, VNCL…LHSF, EIFQ…LFIH, and ISDF…VWQM.

The protein belongs to the WD repeat RBAP46/RBAP48/MSI1 family. As to quaternary structure, binds directly to helix 1 of the histone fold of histone H4, a region that is not accessible when H4 is in chromatin.

The protein localises to the nucleus. Its function is as follows. Core histone-binding subunit that may target chromatin remodeling factors, histone acetyltransferases and histone deacetylases to their histone substrates in a manner that is regulated by nucleosomal DNA. Component of several complexes which regulate chromatin metabolism. The sequence is that of Histone-binding protein RBBP7 (rbbp7) from Danio rerio (Zebrafish).